The following is a 396-amino-acid chain: Acetate kinase (396 aa).

Position 7 (asparagine 7) interacts with Mg(2+). An ATP-binding site is contributed by lysine 14. Arginine 88 contacts substrate. Aspartate 145 acts as the Proton donor/acceptor in catalysis. Residues 205–209, 279–281, and 327–331 contribute to the ATP site; these read HLGNG, DFR, and GIGEN. Glutamate 381 serves as a coordination point for Mg(2+).

It belongs to the acetokinase family. In terms of assembly, homodimer. The cofactor is Mg(2+). Mn(2+) is required as a cofactor.

The protein resides in the cytoplasm. It catalyses the reaction acetate + ATP = acetyl phosphate + ADP. Its pathway is metabolic intermediate biosynthesis; acetyl-CoA biosynthesis; acetyl-CoA from acetate: step 1/2. Its function is as follows. Catalyzes the formation of acetyl phosphate from acetate and ATP. Can also catalyze the reverse reaction. This is Acetate kinase from Campylobacter jejuni subsp. jejuni serotype O:2 (strain ATCC 700819 / NCTC 11168).